The following is an 84-amino-acid chain: Defensin-like protein 49 (84 aa).

The N-terminal stretch at 1–29 (MGITKSLMIFFHIVLLAVSLSNNIILTSG) is a signal peptide. 4 cysteine pairs are disulfide-bonded: cysteine 40–cysteine 82, cysteine 44–cysteine 68, cysteine 54–cysteine 80, and cysteine 58–cysteine 81.

Belongs to the DEFL family.

It localises to the secreted. The protein is Defensin-like protein 49 of Arabidopsis thaliana (Mouse-ear cress).